The primary structure comprises 238 residues: MSSPDQNPSDAAGQTGSSNEEVVDVRRGMFGVKGSGDTSGYGRLVREIVLPGSSPRPYGFYFDEIADRLAEALNRDGVEFEDAIEKVVVYRNELTLHVRREALLRVAQSLRDEPELRFELCLGVNGVHYPHETGRELHAVYPLQSITHNRRLRLEVSAPDSDPHIPSLYAVYPTNDWHERETYDFFGIIFDGHPSLTRIEMPDDWQGHPQRKDYPLGGIPVEYKGAQIPPPDERRGYN.

The tract at residues 1 to 20 (MSSPDQNPSDAAGQTGSSNE) is disordered.

This sequence belongs to the complex I 30 kDa subunit family. In terms of assembly, NDH-1 is composed of 14 different subunits. Subunits NuoB, C, D, E, F, and G constitute the peripheral sector of the complex.

It is found in the cell membrane. It catalyses the reaction a quinone + NADH + 5 H(+)(in) = a quinol + NAD(+) + 4 H(+)(out). Functionally, NDH-1 shuttles electrons from NADH, via FMN and iron-sulfur (Fe-S) centers, to quinones in the respiratory chain. The immediate electron acceptor for the enzyme in this species is believed to be a menaquinone. Couples the redox reaction to proton translocation (for every two electrons transferred, four hydrogen ions are translocated across the cytoplasmic membrane), and thus conserves the redox energy in a proton gradient. This is NADH-quinone oxidoreductase subunit C from Mycobacterium ulcerans (strain Agy99).